The following is an 86-amino-acid chain: Allergen Hum j 3 (86 aa).

This chain is Allergen Hum j 3, found in Humulus japonicus (Japanese hop).